Consider the following 119-residue polypeptide: Large ribosomal subunit protein bL20c (119 aa).

It belongs to the bacterial ribosomal protein bL20 family.

Its subcellular location is the plastid. It localises to the chloroplast. Functionally, binds directly to 23S ribosomal RNA and is necessary for the in vitro assembly process of the 50S ribosomal subunit. It is not involved in the protein synthesizing functions of that subunit. This is Large ribosomal subunit protein bL20c from Saccharum officinarum (Sugarcane).